The following is a 198-amino-acid chain: Transmembrane protein 9B (198 aa).

Residues Met1–Ala33 form the signal peptide. The N-linked (GlcNAc...) asparagine glycan is linked to Asn60. Residues Ile105 to Val125 form a helical membrane-spanning segment. 2 positions are modified to phosphoserine: Ser142 and Ser189.

Belongs to the TMEM9 family. In terms of processing, N-glycosylated.

The protein resides in the lysosome membrane. It is found in the early endosome membrane. In terms of biological role, enhances production of pro-inflammatory cytokines induced by TNF, IL1B, and TLR ligands. Has a role in TNF activation of both the NF-kappaB and MAPK pathways. This is Transmembrane protein 9B (TMEM9B) from Homo sapiens (Human).